The chain runs to 264 residues: Proteasome assembly chaperone 2 (264 aa).

T137 bears the Phosphothreonine mark.

It belongs to the PSMG2 family. Forms a heterodimer with PSMG1. The PSMG1-PSMG2 heterodimer interacts directly with the PSMA5 and PSMA7 proteasome alpha subunits. Degraded by the proteasome upon completion of 20S proteasome maturation.

Its subcellular location is the nucleus. Chaperone protein which promotes assembly of the 20S proteasome as part of a heterodimer with PSMG1. The PSMG1-PSMG2 heterodimer binds to the PSMA5 and PSMA7 proteasome subunits, promotes assembly of the proteasome alpha subunits into the heteroheptameric alpha ring and prevents alpha ring dimerization. The protein is Proteasome assembly chaperone 2 of Mus musculus (Mouse).